Here is a 69-residue protein sequence, read N- to C-terminus: Antimicrobial peptide Eval36 (69 aa).

A signal peptide spans 1 to 23 (MKAQFAILVISMMLLQLIVQTES). L37 bears the Leucine amide mark. A propeptide spanning residues 38–69 (GKRGLRNLDDFQDFLDSDTSDADLRMLRDMFR) is cleaved from the precursor.

The protein belongs to the non-disulfide-bridged peptide (NDBP) superfamily. Short antimicrobial peptide (group 4) family. Expressed by the venom gland.

The protein resides in the secreted. In terms of biological role, probable antimicrobial peptide. Shows low inhibitory activity against herpes simplex virus type 1 (HSV-1). This chain is Antimicrobial peptide Eval36, found in Euscorpiops validus (Scorpion).